The chain runs to 327 residues: DNA polymerase III subunit delta' (327 aa).

DNA polymerase III contains a core (composed of alpha, epsilon and theta chains) that associates with a tau subunit. This core dimerizes to form the POLIII' complex. PolIII' associates with the gamma complex (composed of gamma, delta, delta', psi and chi chains) and with the beta chain to form the complete DNA polymerase III complex.

It carries out the reaction DNA(n) + a 2'-deoxyribonucleoside 5'-triphosphate = DNA(n+1) + diphosphate. DNA polymerase III is a complex, multichain enzyme responsible for most of the replicative synthesis in bacteria. This DNA polymerase also exhibits 3' to 5' exonuclease activity. The protein is DNA polymerase III subunit delta' (holB) of Haemophilus influenzae (strain ATCC 51907 / DSM 11121 / KW20 / Rd).